Reading from the N-terminus, the 538-residue chain is C-22 sterol desaturase ERG5 (538 aa).

A helical transmembrane segment spans residues 46-66 (LKIFATLICILLVWDQVAYQI). Residues K164 and K198 each participate in a glycyl lysine isopeptide (Lys-Gly) (interchain with G-Cter in ubiquitin) cross-link. Residue C476 coordinates heme.

The protein belongs to the cytochrome P450 family. Interacts with ERG28. It depends on heme as a cofactor.

Its subcellular location is the endoplasmic reticulum membrane. It carries out the reaction 5-dehydroepisterol + NADPH + O2 + H(+) = ergosta-5,7,22,24(28)-tetraen-3beta-ol + NADP(+) + 2 H2O. Its pathway is steroid metabolism; ergosterol biosynthesis; ergosterol from zymosterol: step 4/5. Functionally, C-22 sterol desaturase; part of the third module of ergosterol biosynthesis pathway that includes the late steps of the pathway. ERG5 converts 5-dehydroepisterol into ergosta-5,7,22,24(28)-tetraen-3beta-ol by forming the C-22(23) double bond in the sterol side chain. The third module or late pathway involves the ergosterol synthesis itself through consecutive reactions that mainly occur in the endoplasmic reticulum (ER) membrane. Firstly, the squalene synthase ERG9 catalyzes the condensation of 2 farnesyl pyrophosphate moieties to form squalene, which is the precursor of all steroids. Squalene synthase is crucial for balancing the incorporation of farnesyl diphosphate (FPP) into sterol and nonsterol isoprene synthesis. Secondly, the squalene epoxidase ERG1 catalyzes the stereospecific oxidation of squalene to (S)-2,3-epoxysqualene, which is considered to be a rate-limiting enzyme in steroid biosynthesis. Then, the lanosterol synthase ERG7 catalyzes the cyclization of (S)-2,3 oxidosqualene to lanosterol, a reaction that forms the sterol core. In the next steps, lanosterol is transformed to zymosterol through a complex process involving various demethylation, reduction and desaturation reactions. The lanosterol 14-alpha-demethylase ERG11 (also known as CYP51) catalyzes C14-demethylation of lanosterol to produce 4,4'-dimethyl cholesta-8,14,24-triene-3-beta-ol, which is critical for ergosterol biosynthesis. The C-14 reductase ERG24 reduces the C14=C15 double bond of 4,4-dimethyl-cholesta-8,14,24-trienol to produce 4,4-dimethyl-cholesta-8,24-dienol. 4,4-dimethyl-cholesta-8,24-dienol is substrate of the C-4 demethylation complex ERG25-ERG26-ERG27 in which ERG25 catalyzes the three-step monooxygenation required for the demethylation of 4,4-dimethyl and 4alpha-methylsterols, ERG26 catalyzes the oxidative decarboxylation that results in a reduction of the 3-beta-hydroxy group at the C-3 carbon to an oxo group, and ERG27 is responsible for the reduction of the keto group on the C-3. ERG28 has a role as a scaffold to help anchor ERG25, ERG26 and ERG27 to the endoplasmic reticulum and ERG29 regulates the activity of the iron-containing C4-methylsterol oxidase ERG25. Then, the sterol 24-C-methyltransferase ERG6 catalyzes the methyl transfer from S-adenosyl-methionine to the C-24 of zymosterol to form fecosterol. The C-8 sterol isomerase ERG2 catalyzes the reaction which results in unsaturation at C-7 in the B ring of sterols and thus converts fecosterol to episterol. The sterol-C5-desaturase ERG3 then catalyzes the introduction of a C-5 double bond in the B ring to produce 5-dehydroepisterol. The C-22 sterol desaturase ERG5 further converts 5-dehydroepisterol into ergosta-5,7,22,24(28)-tetraen-3beta-ol by forming the C-22(23) double bond in the sterol side chain. Finally, ergosta-5,7,22,24(28)-tetraen-3beta-ol is substrate of the C-24(28) sterol reductase ERG4 to produce ergosterol. The chain is C-22 sterol desaturase ERG5 from Saccharomyces cerevisiae (strain ATCC 204508 / S288c) (Baker's yeast).